Consider the following 122-residue polypeptide: Large ribosomal subunit protein bL17 (122 aa).

This sequence belongs to the bacterial ribosomal protein bL17 family. In terms of assembly, part of the 50S ribosomal subunit. Contacts protein L32.

This chain is Large ribosomal subunit protein bL17, found in Neisseria meningitidis serogroup B (strain ATCC BAA-335 / MC58).